A 79-amino-acid polypeptide reads, in one-letter code: uncharacterized protein (79 aa).

This is an uncharacterized protein from Escherichia coli O6:H1 (strain CFT073 / ATCC 700928 / UPEC).